An 88-amino-acid chain; its full sequence is Small ribosomal subunit protein bS20 (88 aa).

The span at 1–16 (MANTHSAKKATRKITR) shows a compositional bias: basic residues. Residues 1–20 (MANTHSAKKATRKITRRTAV) form a disordered region.

Belongs to the bacterial ribosomal protein bS20 family.

In terms of biological role, binds directly to 16S ribosomal RNA. This chain is Small ribosomal subunit protein bS20, found in Nitrobacter hamburgensis (strain DSM 10229 / NCIMB 13809 / X14).